A 98-amino-acid polypeptide reads, in one-letter code: Citrate lyase acyl carrier protein 1 (98 aa).

S14 carries the O-(phosphoribosyl dephospho-coenzyme A)serine modification.

The protein belongs to the CitD family. As to quaternary structure, oligomer with a subunit composition of (alpha,beta,gamma)6.

Its subcellular location is the cytoplasm. Its function is as follows. Covalent carrier of the coenzyme of citrate lyase. This Salmonella paratyphi A (strain ATCC 9150 / SARB42) protein is Citrate lyase acyl carrier protein 1.